The sequence spans 235 residues: Orotidine 5'-phosphate decarboxylase (235 aa).

Substrate contacts are provided by residues Asp-10, Lys-32, 59-68, Thr-123, Arg-184, Gln-193, Gly-213, and Arg-214; that span reads DLKLHDIPNT. Lys-61 functions as the Proton donor in the catalytic mechanism.

It belongs to the OMP decarboxylase family. Type 1 subfamily. Homodimer.

The catalysed reaction is orotidine 5'-phosphate + H(+) = UMP + CO2. It participates in pyrimidine metabolism; UMP biosynthesis via de novo pathway; UMP from orotate: step 2/2. In terms of biological role, catalyzes the decarboxylation of orotidine 5'-monophosphate (OMP) to uridine 5'-monophosphate (UMP). This is Orotidine 5'-phosphate decarboxylase from Paramagnetospirillum magneticum (strain ATCC 700264 / AMB-1) (Magnetospirillum magneticum).